A 394-amino-acid polypeptide reads, in one-letter code: Putative serine protease HhoA (394 aa).

Positions 1–24 (MKYPTWLRRIGGYLLAFAVGTAFG) are cleaved as a signal peptide. Residues 293–377 (MMNITVDQAQ…ALKLDLLRGD (85 aa)) form the PDZ domain.

Belongs to the peptidase S1C family.

The protein localises to the periplasm. Its function is as follows. A putative protease, its function overlaps that of the related putative proteases HhoB and HtrA. The chain is Putative serine protease HhoA (hhoA) from Synechocystis sp. (strain ATCC 27184 / PCC 6803 / Kazusa).